Reading from the N-terminus, the 561-residue chain is DNA ligase B (561 aa).

The active-site N6-AMP-lysine intermediate is the lysine 124.

This sequence belongs to the NAD-dependent DNA ligase family. LigB subfamily.

It carries out the reaction NAD(+) + (deoxyribonucleotide)n-3'-hydroxyl + 5'-phospho-(deoxyribonucleotide)m = (deoxyribonucleotide)n+m + AMP + beta-nicotinamide D-nucleotide.. Its function is as follows. Catalyzes the formation of phosphodiester linkages between 5'-phosphoryl and 3'-hydroxyl groups in double-stranded DNA using NAD as a coenzyme and as the energy source for the reaction. The sequence is that of DNA ligase B from Cronobacter sakazakii (strain ATCC BAA-894) (Enterobacter sakazakii).